We begin with the raw amino-acid sequence, 188 residues long: FMN-dependent NADPH-azoreductase (188 aa).

The protein belongs to the azoreductase type 2 family. In terms of assembly, homotetramer. It depends on FMN as a cofactor.

Its function is as follows. Catalyzes the reductive cleavage of azo bond in aromatic azo compounds to the corresponding amines. Requires NADPH, but not NADH, as an electron donor for its activity. The polypeptide is FMN-dependent NADPH-azoreductase (azo1) (Staphylococcus saprophyticus subsp. saprophyticus (strain ATCC 15305 / DSM 20229 / NCIMB 8711 / NCTC 7292 / S-41)).